Here is a 274-residue protein sequence, read N- to C-terminus: Subtilisin DY (274 aa).

Glutamine 2 contributes to the Ca(2+) binding site. A Peptidase S8 domain is found at 5 to 273 (PYGIPLIKAD…KGLINVEAAA (269 aa)). Aspartate 32 serves as the catalytic Charge relay system. Ca(2+) is bound at residue aspartate 41. Histidine 63 serves as the catalytic Charge relay system. Ca(2+) contacts are provided by leucine 74, asparagine 76, valine 80, alanine 168, tyrosine 170, and valine 173. The active-site Charge relay system is the serine 220.

This sequence belongs to the peptidase S8 family. It depends on Ca(2+) as a cofactor.

Its subcellular location is the secreted. It catalyses the reaction Hydrolysis of proteins with broad specificity for peptide bonds, and a preference for a large uncharged residue in P1. Hydrolyzes peptide amides.. Functionally, subtilisin is an extracellular alkaline serine protease, it catalyzes the hydrolysis of proteins and peptide amides. This is Subtilisin DY (apr) from Bacillus licheniformis.